The chain runs to 1372 residues: DNA-directed RNA polymerase subunit beta' (1372 aa).

Zn(2+)-binding residues include C69, C71, C84, and C87. D460, D462, and D464 together coordinate Mg(2+). Zn(2+) contacts are provided by C808, C882, C889, and C892.

It belongs to the RNA polymerase beta' chain family. The RNAP catalytic core consists of 2 alpha, 1 beta, 1 beta' and 1 omega subunit. When a sigma factor is associated with the core the holoenzyme is formed, which can initiate transcription. Mg(2+) serves as cofactor. It depends on Zn(2+) as a cofactor.

The catalysed reaction is RNA(n) + a ribonucleoside 5'-triphosphate = RNA(n+1) + diphosphate. In terms of biological role, DNA-dependent RNA polymerase catalyzes the transcription of DNA into RNA using the four ribonucleoside triphosphates as substrates. The protein is DNA-directed RNA polymerase subunit beta' of Rickettsia bellii (strain OSU 85-389).